The primary structure comprises 136 residues: Antistasin (136 aa).

The signal sequence occupies residues 1-17 (MIKLAILLLFTVAIVRC). Gln18 carries the pyrrolidone carboxylic acid modification. 10 disulfide bridges follow: Cys25/Cys36, Cys30/Cys43, Cys45/Cys65, Cys50/Cys68, Cys54/Cys70, Cys79/Cys90, Cys84/Cys97, Cys99/Cys120, Cys105/Cys123, and Cys109/Cys125. Residues 45–70 (CSGVRCRMHCPHGFQRSRYGCEFCKC) enclose the Antistasin-like 1 domain. Residues 100 to 125 (KIDINCRKTCPNGLKRDKLGCEYCEC) enclose the Antistasin-like 2 domain. Heparin-binding positions include 114-117 (KRDK) and 128-135 (KRKLIPRL).

This sequence belongs to the protease inhibitor I15 (antistasin) family.

It localises to the secreted. In terms of biological role, this highly disulfide-bonded protein is a potent inhibitor of factor Xa. May have therapeutic utility as an anticoagulant. Also exhibits a strong metastatic activity. This is Antistasin from Haementeria officinalis (Mexican leech).